A 707-amino-acid polypeptide reads, in one-letter code: Zinc finger protein 60 (707 aa).

The 73-residue stretch at 14–86 (VTFRDVAVDF…VKKETGRPSQ (73 aa)) folds into the KRAB domain. C2H2-type zinc fingers lie at residues 173–195 (YKCK…ESIH), 201–223 (YECK…QKSH), 229–251 (FECN…KNIH), 257–282 (FECE…RTIH), 288–310 (YKCN…QKIH), 316–338 (FHCK…ENIH), 344–366 (FECK…YDTH), 372–394 (FECN…QKTH), 400–422 (FKCK…QRIH), 428–450 (YQCK…QSIH), 456–478 (FECK…QRFH), 484–506 (FECK…KTSH), 512–534 (FECK…RIIH), 540–562 (YKCN…EKIH), 568–590 (FECK…QTIH), 596–618 (YECE…QRIH), 624–646 (FQCK…ERIH), 652–674 (FQCK…FRIH), and 680–702 (YECS…QSIH).

It belongs to the krueppel C2H2-type zinc-finger protein family. In terms of tissue distribution, expressed widely and evenly in most adult mouse tissues.

The protein resides in the nucleus. In terms of biological role, may have a role during differentiation processes. The sequence is that of Zinc finger protein 60 (Zfp60) from Mus musculus (Mouse).